Reading from the N-terminus, the 350-residue chain is 26S proteasome non-ATPase regulatory subunit 8 (350 aa).

Positions 1–24 are disordered; it reads MFIKGRAPRAPPRERRRATRGGLR. Serine 106 is modified (phosphoserine). Positions 162–331 constitute a PCI domain; the sequence is PSFERYMAQL…QQKPEDTTIP (170 aa). Lysine 297 is covalently cross-linked (Glycyl lysine isopeptide (Lys-Gly) (interchain with G-Cter in SUMO2)).

Belongs to the proteasome subunit S14 family. As to quaternary structure, component of the 19S proteasome regulatory particle complex. The 26S proteasome consists of a 20S core particle (CP) and two 19S regulatory subunits (RP). The regulatory particle is made of a lid composed of 9 subunits including PSMD8, a base containing 6 ATPases and few additional components. Interacts with DDI2. Interacts with TASOR.

Functionally, component of the 26S proteasome, a multiprotein complex involved in the ATP-dependent degradation of ubiquitinated proteins. This complex plays a key role in the maintenance of protein homeostasis by removing misfolded or damaged proteins, which could impair cellular functions, and by removing proteins whose functions are no longer required. Therefore, the proteasome participates in numerous cellular processes, including cell cycle progression, apoptosis, or DNA damage repair. In Homo sapiens (Human), this protein is 26S proteasome non-ATPase regulatory subunit 8 (PSMD8).